The sequence spans 387 residues: 3-ketoacyl-CoA thiolase (387 aa).

The active-site Acyl-thioester intermediate is Cys-91. Catalysis depends on proton acceptor residues His-343 and Cys-373.

The protein belongs to the thiolase-like superfamily. Thiolase family. In terms of assembly, heterotetramer of two alpha chains (FadB) and two beta chains (FadA).

The protein resides in the cytoplasm. The enzyme catalyses an acyl-CoA + acetyl-CoA = a 3-oxoacyl-CoA + CoA. The protein operates within lipid metabolism; fatty acid beta-oxidation. In terms of biological role, catalyzes the final step of fatty acid oxidation in which acetyl-CoA is released and the CoA ester of a fatty acid two carbons shorter is formed. In Shigella boydii serotype 4 (strain Sb227), this protein is 3-ketoacyl-CoA thiolase.